The sequence spans 1360 residues: Lysine-specific demethylase REF6 (1360 aa).

N-acetylalanine is present on alanine 2. The region spanning 20–61 (APEFRPTLAEFQDPIAYILKIEEEASRYGICKILPPLPPPSK) is the JmjN domain. Residues 203-369 (ETAWNMRAMS…MAKDAAIRRA (167 aa)) form the JmjC domain. 3 residues coordinate Fe cation: histidine 246, glutamate 248, and histidine 337. Residues 652-698 (YGDSSDSEEEDQKGLVTPSSKGETKTYDQEGSDGHEEARDGRTSDFN) are disordered. Positions 673–694 (GETKTYDQEGSDGHEEARDGRT) are enriched in basic and acidic residues. The short motif at 944-951 (CRKRKIRA) is the Nuclear localization signal element. Disordered regions lie at residues 955 to 1012 (PRKK…DPHK), 1044 to 1081 (AASE…SQQT), 1133 to 1155 (TGKR…QSSR), and 1172 to 1238 (EELD…NEEE). Composition is skewed to polar residues over residues 994–1008 (ETGN…NQMS) and 1046–1057 (SESSMENGSQHS). Over residues 1136–1147 (RQTRSTAKRIAK) the composition is skewed to basic residues. The span at 1225-1238 (EKEEEEEEEENEEE) shows a compositional bias: acidic residues. A C2H2-type 1; degenerate zinc finger spans residues 1243-1266 (YQCNMEGCTMSFSSEKQLMLHKRN). Cysteine 1245, cysteine 1250, histidine 1263, cysteine 1268, cysteine 1273, histidine 1280, histidine 1286, histidine 1290, cysteine 1298, cysteine 1303, histidine 1316, histidine 1320, cysteine 1328, cysteine 1333, histidine 1346, and histidine 1352 together coordinate Zn(2+). 3 consecutive C2H2-type zinc fingers follow at residues 1266 to 1290 (NICP…QRVH), 1296 to 1320 (LKCP…IRVH), and 1326 to 1352 (YVCA…KTGH). The segment at 1275–1348 (KNFFSHKYLV…FVSDFSRHKR (74 aa)) is DNA-binding.

This sequence belongs to the JHDM3 histone demethylase family. As to quaternary structure, forms homooligomers. Interacts with BZR2 (via N-terminus). Interacts with BRM in the SWI/SNF complex. Interacts (via N-terminus) with NFYC9. Associates with INO80. Highly expressed in the shoot apical meristem and primary and secondary root tips, and lower expression in cotyledons, leaves and root axis along vascular tissues. Detected in inflorescences, stems and siliques. Present in seeds.

The protein resides in the nucleus. The catalysed reaction is N(6),N(6),N(6)-trimethyl-L-lysyl(27)-[histone H3] + 2-oxoglutarate + O2 = N(6),N(6)-dimethyl-L-lysyl(27)-[histone H3] + formaldehyde + succinate + CO2. It carries out the reaction N(6),N(6)-dimethyl-L-lysyl(27)-[histone H3] + 2-oxoglutarate + O2 = N(6)-methyl-L-lysyl(27)-[histone H3] + formaldehyde + succinate + CO2. In terms of biological role, histone demethylase that demethylates 'Lys-27' (H3K27me) of histone H3, thus acting as a positive regulator of gene expression. Demethylates both tri- (H3K27me3) and di-methylated (H3K27me2) H3K27me. Also demethylates H3K4me3/2 and H3K36me3/2 in an in vitro assay. Involved in the transcriptional regulation of hundreds of genes regulating developmental patterning and responses to various stimuli. Binds DNA via its four zinc fingers in a sequence-specific manner, 5'-CTCTG(C/T)T(C/T)-3' (5'-CTCTGYTY-3'), with a preference for hypo-methylated status (e.g. cytosine methylation), to promote the demethylation of H3K27me3 and recruit the chromatin remodeler BRM in order to activate gene expression. Participates in the regulation of organ boundary formation. Bind mostly motifs located in active chromatin states which are depleted for heterochromatic modifications. Involved in the regulation of flowering time by repressing FLOWERING LOCUS C (FLC) expression. Stimulates lateral roots formation (e.g. primordium initiation and emergence) via the epigenetic de-repression of PIN genes such as PIN1, PIN3 and PIN7 directly by modulating the methylation status of their loci. Interacts with the NF-Y complex to regulate SOC1. Mediates the recruitment of BRM to its target loci. Together with EEN, involved in the epigenetic chromatin-dependent regulatory mechanism that monitors the expression of the essential multifunctional plant stress regulator EIN2 via H3K27me3 repressive histone demethylation and histone variant H2A.Z eviction, thus modulating responses to ethylene (ET), especially during embryogenesis. Eluviates seed dormancy by triggering abscisic acid (ABA) catabolism in seeds via the induction of CYP707A1 and CYP707A3 expression, genes involved in ABA degradation; binds directly to CYP707A1 and CYP707A3 loci to reduce their H3K27me3 levels in developing siliques. Required for systemic acquired resistance (SAR) toward pathogenic bacteria (e.g. Pseudomonas syringae pv tomato DC3000 (avrPto)). Together with FLD and MSI4/FVE, contributes to dehydroabietinal-dependent (DA, a diterpenoid tricyclic diterpene) activation of flowering ans SAR. Binds to the HSFA2 chromatin region to alleviate H3K27me3 repressive marks and trigger its expression in response to heat in a BRM-dependent manner. Involved in the mechanisms necessary for quick response to heat and subsequent heritable transgenerational memory of heat acclimation (global warming) such as early flowering and attenuated immunity; this process includes epigenetic regulation as well as post-transcriptional gene silencing (PTGS). In response to heat, HSFA2 is activated and promotes the expression of REF6 which in turn derepresses HSFA2, thus establishing a heritable feedback loop able to trigger SGIP1 and subsequent SGIP1-mediated SGS3 degradation; this prevents the biosynthesis of trans-acting siRNA (tasiRNA) and leads to the release of HTT5, which drives early flowering but attenuates immunity. Involved in the maintenance of H3K27me1 histone marks on euchromatin in a PRC2-dependent manner, to maintain low-level basal expression of corresponding genes. Together with ELF6, required for H3K27me3 resetting (especially in constitutive heterochromatin within the pericentromeric regions) and transgenerational inheritance of histone marks, thus acting in safeguarding genome and epigenome integrity during sexual reproduction. This chain is Lysine-specific demethylase REF6, found in Arabidopsis thaliana (Mouse-ear cress).